The primary structure comprises 1009 residues: Protein-tyrosine kinase 2-beta (1009 aa).

The region spanning 39–359 is the FERM domain; that stretch reads RILKVCFYSN…GYCRLQGEHK (321 aa). A phosphoserine mark is found at serine 361, serine 375, and serine 399. The residue at position 402 (tyrosine 402) is a Phosphotyrosine; by autocatalysis. Residues 425–683 enclose the Protein kinase domain; it reads VVLNRILGEG…ELVCSLSDIY (259 aa). Residues 431-439, lysine 457, and 503-509 contribute to the ATP site; these read LGEGFFGEV and ELYPYGE. Catalysis depends on aspartate 549, which acts as the Proton acceptor. Tyrosine 579 is subject to Phosphotyrosine. At tyrosine 580 the chain carries Phosphotyrosine; by SRC, FYN and LCK. Residues 696-728 are disordered; it reads NARYRPPKILEPTTFQEPPPKPSRPKYRPPPQT. Positions 712–727 are enriched in pro residues; that stretch reads EPPPKPSRPKYRPPPQ. Tyrosine 722 is subject to Phosphotyrosine. Residue serine 762 is modified to Phosphoserine. Residue threonine 765 is modified to Phosphothreonine. The interaction with TGFB1I1 stretch occupies residues 801–1009; that stretch reads KIKMKQVLER…VANLAHPPAE (209 aa). At tyrosine 834 the chain carries Phosphotyrosine. Residue serine 839 is modified to Phosphoserine. Threonine 842 bears the Phosphothreonine mark. The residue at position 849 (tyrosine 849) is a Phosphotyrosine. A Phosphoserine modification is found at serine 866. The segment at 868–1009 is focal adhesion targeting (FAT); the sequence is QPTANLDRTD…VANLAHPPAE (142 aa). Position 881 is a phosphotyrosine (tyrosine 881).

Belongs to the protein kinase superfamily. Tyr protein kinase family. FAK subfamily. Homodimer, or homooligomer. Interacts with KCNA2. Interacts with NPHP1, ASAP1, ASAP2, ARHGAP26, SKAP2 and TGFB1I1. The Tyr-402 phosphorylated form interacts with SRC (via SH2 domain) and SRC family members. Forms a signaling complex with EPHA1, LCK and phosphatidylinositol 3-kinase; upon activation by EFNA1. Interacts with GRB2 (via SH2 domain). Interacts with P53/TP53 and MDM2. Interacts with MYLK. Interacts with BCAR1. Interacts with RB1CC1. Interacts with RHOU. Interacts with VAV1. Interacts with PDPK1. Interacts with DLG4. Interacts with LPXN and PTPN12. Interacts with SIRPA and SH2D3C. Interacts (hypophosphorylated) with PXN. Interacts with ARHGAP10. Phosphorylated on tyrosine residues in response to various stimuli that elevate the intracellular calcium concentration; this activation is indirect and may be mediated by production of reactive oxygen species (ROS). Tyr-402 is the major autophosphorylation site, but other kinases can also phosphorylate Tyr-402. Autophosphorylation occurs in trans, i.e. one subunit of the dimeric receptor phosphorylates tyrosine residues on the other subunit. Phosphorylation at Tyr-402 promotes interaction with SRC and SRC family members, leading to phosphorylation at Tyr-579; Tyr-580 and Tyr-881. Phosphorylation at Tyr-881 is important for interaction with GRB2. Phosphorylated on tyrosine residues upon activation of FGR and PKC. Recruitment by NPHP1 to cell matrix adhesions initiates Tyr-402 phosphorylation. In monocytes, adherence to substrata is required for tyrosine phosphorylation and kinase activation. Angiotensin II, thapsigargin and L-alpha-lysophosphatidic acid (LPA) also induce autophosphorylation and increase kinase activity. Phosphorylation by MYLK promotes ITGB2 activation and is thus essential to trigger neutrophil transmigration during lung injury. Dephosphorylated by PTPN12.

It localises to the cytoplasm. It is found in the perinuclear region. The protein resides in the cell membrane. The protein localises to the cell junction. Its subcellular location is the focal adhesion. It localises to the cell projection. It is found in the lamellipodium. The protein resides in the cell cortex. The protein localises to the nucleus. It catalyses the reaction L-tyrosyl-[protein] + ATP = O-phospho-L-tyrosyl-[protein] + ADP + H(+). Its activity is regulated as follows. Activated in response to stimuli that lead to increased intracellular Ca(2+) levels; this activation is indirect and may be mediated by calcium-mediated production of reactive oxygen species (ROS). Activated by autophosphorylation at Tyr-402; this creates a binding site for SRC family kinases and leads to phosphorylation at additional tyrosine residues. Phosphorylation at Tyr-402, Tyr-579 and Tyr-580 is required for optimal kinase activity. Functionally, non-receptor protein-tyrosine kinase that regulates reorganization of the actin cytoskeleton, cell polarization, cell migration, adhesion, spreading and bone remodeling. Plays a role in the regulation of the humoral immune response, and is required for normal levels of marginal B-cells in the spleen and normal migration of splenic B-cells. Required for normal macrophage polarization and migration towards sites of inflammation. Regulates cytoskeleton rearrangement and cell spreading in T-cells, and contributes to the regulation of T-cell responses. Promotes osteoclastic bone resorption; this requires both PTK2B/PYK2 and SRC. May inhibit differentiation and activity of osteoprogenitor cells. Functions in signaling downstream of integrin and collagen receptors, immune receptors, G-protein coupled receptors (GPCR), cytokine, chemokine and growth factor receptors, and mediates responses to cellular stress. Forms multisubunit signaling complexes with SRC and SRC family members upon activation; this leads to the phosphorylation of additional tyrosine residues, creating binding sites for scaffold proteins, effectors and substrates. Regulates numerous signaling pathways. Promotes activation of phosphatidylinositol 3-kinase and of the AKT1 signaling cascade. Promotes activation of NOS3. Regulates production of the cellular messenger cGMP. Promotes activation of the MAP kinase signaling cascade, including activation of MAPK1/ERK2, MAPK3/ERK1 and MAPK8/JNK1. Promotes activation of Rho family GTPases, such as RHOA and RAC1. Recruits the ubiquitin ligase MDM2 to P53/TP53 in the nucleus, and thereby regulates P53/TP53 activity, P53/TP53 ubiquitination and proteasomal degradation. Acts as a scaffold, binding to both PDPK1 and SRC, thereby allowing SRC to phosphorylate PDPK1 at 'Tyr-9, 'Tyr-373', and 'Tyr-376'. Promotes phosphorylation of NMDA receptors by SRC family members, and thereby contributes to the regulation of NMDA receptor ion channel activity and intracellular Ca(2+) levels. May also regulate potassium ion transport by phosphorylation of potassium channel subunits. Phosphorylates SRC; this increases SRC kinase activity. Phosphorylates ASAP1, NPHP1, KCNA2 and SHC1. Promotes phosphorylation of ASAP2, RHOU and PXN; this requires both SRC and PTK2/PYK2. In Mus musculus (Mouse), this protein is Protein-tyrosine kinase 2-beta (Ptk2b).